We begin with the raw amino-acid sequence, 852 residues long: Zinc finger and SCAN domain-containing protein 29 (852 aa).

Residues 18-100 form the SCAN box domain; it reads RQRFRRFHYQ…TLVEDLEREP (83 aa). Disordered stretches follow at residues 96–182, 347–400, and 502–557; these read LERE…PKSG, ASHS…SAAP, and PNDG…RAPV. Lys112 is covalently cross-linked (Glycyl lysine isopeptide (Lys-Gly) (interchain with G-Cter in SUMO2)). Position 153 is a phosphoserine (Ser153). Lys180 participates in a covalent cross-link: Glycyl lysine isopeptide (Lys-Gly) (interchain with G-Cter in SUMO2). Residues 508-517 show a composition bias toward polar residues; the sequence is ETASCPVQGT. A compositionally biased stretch (acidic residues) spans 528–545; it reads EADEATEEDSDDDEEDTE. Ser561 is subject to Phosphoserine. A Glycyl lysine isopeptide (Lys-Gly) (interchain with G-Cter in SUMO2) cross-link involves residue Lys576. A disordered region spans residues 603–625; the sequence is QGKGNESDCRSGRQWAKTSGEKR. A Glycyl lysine isopeptide (Lys-Gly) (interchain with G-Cter in SUMO2) cross-link involves residue Lys652. 6 consecutive C2H2-type zinc fingers follow at residues 678–700, 706–728, 734–756, 762–784, 790–812, and 818–840; these read YKCADCGKSFSRSARLIRHRRIH, YKCLDCGKSFRDSSNFITHRRIH, YQCGECGKCFNQSSSLIIHQRTH, YQCEECGKSFNNSSHFSAHRRIH, HVCPDCGKSFSKSSDLRAHHRTH, and YGCHDCGKCFSKSSALNKHGEIH.

The protein belongs to the krueppel C2H2-type zinc-finger protein family.

The protein resides in the nucleus. May be involved in transcriptional regulation. This Homo sapiens (Human) protein is Zinc finger and SCAN domain-containing protein 29 (ZSCAN29).